The primary structure comprises 198 residues: dTTP/UTP pyrophosphatase (198 aa).

Asp-69 serves as the catalytic Proton acceptor.

Belongs to the Maf family. YhdE subfamily. The cofactor is a divalent metal cation.

Its subcellular location is the cytoplasm. It carries out the reaction dTTP + H2O = dTMP + diphosphate + H(+). It catalyses the reaction UTP + H2O = UMP + diphosphate + H(+). Functionally, nucleoside triphosphate pyrophosphatase that hydrolyzes dTTP and UTP. May have a dual role in cell division arrest and in preventing the incorporation of modified nucleotides into cellular nucleic acids. This is dTTP/UTP pyrophosphatase from Idiomarina loihiensis (strain ATCC BAA-735 / DSM 15497 / L2-TR).